Here is a 165-residue protein sequence, read N- to C-terminus: ATP synthase subunit b (165 aa).

Residues leucine 11–tryptophan 31 traverse the membrane as a helical segment.

This sequence belongs to the ATPase B chain family. In terms of assembly, F-type ATPases have 2 components, F(1) - the catalytic core - and F(0) - the membrane proton channel. F(1) has five subunits: alpha(3), beta(3), gamma(1), delta(1), epsilon(1). F(0) has three main subunits: a(1), b(2) and c(10-14). The alpha and beta chains form an alternating ring which encloses part of the gamma chain. F(1) is attached to F(0) by a central stalk formed by the gamma and epsilon chains, while a peripheral stalk is formed by the delta and b chains.

It localises to the cell membrane. Functionally, f(1)F(0) ATP synthase produces ATP from ADP in the presence of a proton or sodium gradient. F-type ATPases consist of two structural domains, F(1) containing the extramembraneous catalytic core and F(0) containing the membrane proton channel, linked together by a central stalk and a peripheral stalk. During catalysis, ATP synthesis in the catalytic domain of F(1) is coupled via a rotary mechanism of the central stalk subunits to proton translocation. Component of the F(0) channel, it forms part of the peripheral stalk, linking F(1) to F(0). In Elusimicrobium minutum (strain Pei191), this protein is ATP synthase subunit b.